We begin with the raw amino-acid sequence, 364 residues long: 3-isopropylmalate dehydrogenase (364 aa).

78–89 (GPKWGTGAVRPE) lines the NAD(+) pocket. Substrate contacts are provided by R96, R106, R135, and D224. Residues D224, D249, and D253 each coordinate Mg(2+). An NAD(+)-binding site is contributed by 288 to 299 (GSAPDLPANKVN).

The protein belongs to the isocitrate and isopropylmalate dehydrogenases family. In terms of assembly, homodimer. Requires Mg(2+) as cofactor. The cofactor is Mn(2+).

Its subcellular location is the cytoplasm. The enzyme catalyses (2R,3S)-3-isopropylmalate + NAD(+) = 4-methyl-2-oxopentanoate + CO2 + NADH. The protein operates within amino-acid biosynthesis; L-leucine biosynthesis; L-leucine from 3-methyl-2-oxobutanoate: step 3/4. Functionally, catalyzes the oxidation of 3-carboxy-2-hydroxy-4-methylpentanoate (3-isopropylmalate) to 3-carboxy-4-methyl-2-oxopentanoate. The product decarboxylates to 4-methyl-2 oxopentanoate. This Wickerhamomyces anomalus (strain ATCC 8168 / CBS 5759 / DSM 6766 / JCM 3585 / IAM 12210 / NCYC 432 / NBRC 10213 / NRRL Y-366 / AJ 5027) (Yeast) protein is 3-isopropylmalate dehydrogenase (LEU2).